The chain runs to 725 residues: mRNA decay activator protein ZFP36L3 (725 aa).

Residues methionine 1–glycine 25 show a composition bias toward low complexity. Residues methionine 1 to threonine 119 are disordered. 2 stretches are compositionally biased toward polar residues: residues alanine 42–alanine 72 and histidine 100–threonine 119. 2 C3H1-type zinc fingers span residues arginine 122–arginine 150 and lysine 160–proline 188. The interval valine 193–serine 711 is necessary for cytoplasmic localization. A disordered region spans residues serine 276–glycine 310. The span at histidine 280 to proline 294 shows a compositional bias: basic and acidic residues. The next 4 membrane-spanning stretches (helical) occupy residues leucine 380–leucine 400, alanine 420–methionine 440, alanine 441–glycine 461, and alanine 468–valine 488. The tract at residues aspartate 686 to asparagine 709 is disordered. Residues arginine 693–glutamate 702 show a composition bias toward low complexity.

As to expression, expressed in placenta and extraembryonic tissues (at protein level). Not detected in embryos and fetus.

It localises to the cytoplasm. Its subcellular location is the membrane. Its function is as follows. Placenta-specific zinc-finger RNA-binding protein that destabilizes cytoplasmic AU-rich element (ARE)-containing mRNA transcripts by promoting their poly(A) tail removal or deadenylation, and hence provide a mechanism for attenuating protein synthesis. Binds to the 3'-UTR ARE of placental target mRNAs, such as TNF, HBEGF and LIPG. Involved in placental expression of many genes important for normal placental physiology. The polypeptide is mRNA decay activator protein ZFP36L3 (Mus musculus (Mouse)).